We begin with the raw amino-acid sequence, 89 residues long: Protein YihD (89 aa).

To H.influenzae HI_0845.

The protein is Protein YihD (yihD) of Escherichia coli O157:H7.